We begin with the raw amino-acid sequence, 226 residues long: Adenylate kinase (226 aa).

11 to 16 (GSGKGT) provides a ligand contact to ATP. An NMP region spans residues 31–64 (SAGEILKHALSVTKFHFNFNTDNMLNQINSGNLV). AMP is bound by residues 62-64 (NLV), 90-93 (GFPR), and Gln97. Residues 127–164 (GRQVHIKSGRTYHIKFNPPKLDGIDDITGEKLVIRADD) form an LID region. Residues Arg128 and 137–138 (TY) each bind ATP. AMP is bound by residues Arg161 and Arg172. Gln205 contributes to the ATP binding site.

It belongs to the adenylate kinase family. Monomer.

It localises to the cytoplasm. The catalysed reaction is AMP + ATP = 2 ADP. Its pathway is purine metabolism; AMP biosynthesis via salvage pathway; AMP from ADP: step 1/1. In terms of biological role, catalyzes the reversible transfer of the terminal phosphate group between ATP and AMP. Plays an important role in cellular energy homeostasis and in adenine nucleotide metabolism. The sequence is that of Adenylate kinase from Blochmanniella floridana.